The following is a 111-amino-acid chain: Cell cycle protein GpsB (111 aa).

A coiled-coil region spans residues 32–63 (LDDIMKDYDAYEAIIKELKGEIARLKAQAANS). Residues 59 to 80 (QAANSPKTTLPTEESNDVLRTE) form a disordered region. Polar residues predominate over residues 60 to 71 (AANSPKTTLPTE).

Belongs to the GpsB family. In terms of assembly, forms polymers through the coiled coil domains. Interacts with PBP1, MreC and EzrA.

Its subcellular location is the cytoplasm. Its function is as follows. Divisome component that associates with the complex late in its assembly, after the Z-ring is formed, and is dependent on DivIC and PBP2B for its recruitment to the divisome. Together with EzrA, is a key component of the system that regulates PBP1 localization during cell cycle progression. Its main role could be the removal of PBP1 from the cell pole after pole maturation is completed. Also contributes to the recruitment of PBP1 to the division complex. Not essential for septum formation. The protein is Cell cycle protein GpsB of Streptococcus suis (strain 98HAH33).